We begin with the raw amino-acid sequence, 193 residues long: GTP cyclohydrolase 1 (193 aa).

The Zn(2+) site is built by C73, H76, and C144.

This sequence belongs to the GTP cyclohydrolase I family. In terms of assembly, homomer.

The enzyme catalyses GTP + H2O = 7,8-dihydroneopterin 3'-triphosphate + formate + H(+). Its pathway is cofactor biosynthesis; 7,8-dihydroneopterin triphosphate biosynthesis; 7,8-dihydroneopterin triphosphate from GTP: step 1/1. The polypeptide is GTP cyclohydrolase 1 (Hyperthermus butylicus (strain DSM 5456 / JCM 9403 / PLM1-5)).